A 181-amino-acid chain; its full sequence is Large ribosomal subunit protein uL6 (181 aa).

Belongs to the universal ribosomal protein uL6 family. In terms of assembly, part of the 50S ribosomal subunit.

In terms of biological role, this protein binds to the 23S rRNA, and is important in its secondary structure. It is located near the subunit interface in the base of the L7/L12 stalk, and near the tRNA binding site of the peptidyltransferase center. The protein is Large ribosomal subunit protein uL6 of Flavobacterium psychrophilum (strain ATCC 49511 / DSM 21280 / CIP 103535 / JIP02/86).